Consider the following 395-residue polypeptide: Zinc-regulated GTPase metalloprotein activator 1F (395 aa).

The tract at residues M1–L22 is disordered. Residues V8–P20 show a composition bias toward acidic residues. The psi-PxLVp motif motif lies at E17–P24. Residue G49–T56 participates in GTP binding. Residues C107, C109, and C110 each contribute to the Zn(2+) site. The short motif at C107 to C110 is the CXCC motif element. GTP contacts are provided by residues C110–D114 and N203–D206. Residues I274 to V377 form the CobW C-terminal domain.

The protein belongs to the SIMIBI class G3E GTPase family. ZNG1 subfamily.

It localises to the nucleus. The enzyme catalyses GTP + H2O = GDP + phosphate + H(+). Zinc chaperone that directly transfers zinc cofactor to target metalloproteins, thereby activating them. Catalyzes zinc insertion into the active site of methionine aminopeptidase METAP1, which function to cleave the initiator methionine from polypeptides during or after protein translation. Mechanistically, the N-terminal psi-PxLVp motif binds to the C6H2-type zinc finger of inactive form of METAP1. After formation of the docked complex, zinc is transferred from the CXCC motif in the GTPase domain of ZNG1F to the zinc binding site in the peptidase domain of METAP1 in a process requiring GTP hydrolysis. GTP/GDP exchange is required for release of active METAP1. The protein is Zinc-regulated GTPase metalloprotein activator 1F of Homo sapiens (Human).